Consider the following 452-residue polypeptide: Retinoid-inducible serine carboxypeptidase (452 aa).

A signal peptide spans 1–28 (MELSRRICLVRLWLLLLSFLLGFSAGSA). 3 N-linked (GlcNAc...) asparagine glycosylation sites follow: Asn-64, Asn-102, and Asn-126. Residue Ser-167 is part of the active site. N-linked (GlcNAc...) asparagine glycans are attached at residues Asn-192 and Asn-362. Catalysis depends on residues Asp-371 and His-431.

It belongs to the peptidase S10 family. Highly expressed in aorta, bladder, and kidney with much lower levels in all other tissues analyzed. Expression in kidney is restricted to proximal convoluted tubules.

Its subcellular location is the secreted. Functionally, may be involved in vascular wall and kidney homeostasis. This chain is Retinoid-inducible serine carboxypeptidase (Scpep1), found in Rattus norvegicus (Rat).